The following is a 223-amino-acid chain: CKLF-like MARVEL transmembrane domain-containing protein 5 (223 aa).

Residues 29–213 form the MARVEL domain; that stretch reads FLTSHKGILL…DAFKIYRTEM (185 aa). Helical transmembrane passes span 35–55, 56–76, 162–182, and 186–206; these read GILL…FTAS, ISAY…FLFL, FLRC…AVTS, and AAIA…YDAF.

This sequence belongs to the chemokine-like factor family. Highly expressed in the brain.

The protein resides in the membrane. This Homo sapiens (Human) protein is CKLF-like MARVEL transmembrane domain-containing protein 5 (CMTM5).